Reading from the N-terminus, the 247-residue chain is Phosphoribosylaminoimidazole-succinocarboxamide synthase (247 aa).

This sequence belongs to the SAICAR synthetase family.

The enzyme catalyses 5-amino-1-(5-phospho-D-ribosyl)imidazole-4-carboxylate + L-aspartate + ATP = (2S)-2-[5-amino-1-(5-phospho-beta-D-ribosyl)imidazole-4-carboxamido]succinate + ADP + phosphate + 2 H(+). The protein operates within purine metabolism; IMP biosynthesis via de novo pathway; 5-amino-1-(5-phospho-D-ribosyl)imidazole-4-carboxamide from 5-amino-1-(5-phospho-D-ribosyl)imidazole-4-carboxylate: step 1/2. This is Phosphoribosylaminoimidazole-succinocarboxamide synthase from Herpetosiphon aurantiacus (strain ATCC 23779 / DSM 785 / 114-95).